Here is a 457-residue protein sequence, read N- to C-terminus: Transcription factor E2F3 (457 aa).

A disordered region spans residues 80-171 (LLPSVPGTEP…PKSPSEKTRY (92 aa)). Positions 93 to 102 (SLYTTPQGPS) are enriched in polar residues. Residues 96-145 (TTPQGPSSRVGLLQQPPAPGRGGGGGPPAKRRLELGESGHQYLSDGLKTP) form a cyclin A/CDK2 binding region. Residues 147–237 (GKGRAALRSP…KNNVQWMGCS (91 aa)) mediate DNA binding. Over residues 155-164 (SPDSPKTPKS) the composition is skewed to low complexity. Residues 196–217 (LNKAAEVLKVQKRRIYDITNVL) are leucine-zipper. The DEF box signature appears at 201-237 (EVLKVQKRRIYDITNVLEGIHLIKKKSKNNVQWMGCS). The segment at 238-329 (LSEDGGMLAQ…VPDSIESLQI (92 aa)) is dimerization. The tract at residues 350–387 (HRPMKTNNQDHNGNIPKPTSKDLASNNSGHSDCSVSTA) is disordered. Residues 371 to 387 (DLASNNSGHSDCSVSTA) are compositionally biased toward polar residues. The segment at 383 to 457 (SVSTANLSPL…LPLVEDFMCS (75 aa)) is transactivation. Residues 424–441 (EDYLLSLGEEEGISDLFD) are retinoblastoma protein binding.

Belongs to the E2F/DP family. Component of the DRTF1/E2F transcription factor complex. Binds cooperatively with TFDP1/Dp-1 to E2F sites. Interacts with retinoblastoma protein RB1 and related proteins (such as RBL1) that inhibit the E2F transactivation domain. Binds EAPP.

The protein localises to the nucleus. In terms of biological role, transcription activator that binds DNA cooperatively with DP proteins through the E2 recognition site, 5'-TTTC[CG]CGC-3' found in the promoter region of a number of genes whose products are involved in cell cycle regulation or in DNA replication. The DRTF1/E2F complex functions in the control of cell-cycle progression from G1 to S phase. E2F3 binds specifically to RB1 in a cell-cycle dependent manner. Inhibits adipogenesis, probably through the repression of CEBPA binding to its target gene promoters. This is Transcription factor E2F3 (E2f3) from Mus musculus (Mouse).